The primary structure comprises 225 residues: Phosphoribosylformylglycinamidine synthase subunit PurQ (225 aa).

The 222-residue stretch at 4-225 (RIGVITFPGT…LSVLDTLVTA (222 aa)) folds into the Glutamine amidotransferase type-1 domain. Catalysis depends on C87, which acts as the Nucleophile. Active-site residues include H196 and E198.

In terms of assembly, part of the FGAM synthase complex composed of 1 PurL, 1 PurQ and 2 PurS subunits.

It is found in the cytoplasm. The enzyme catalyses N(2)-formyl-N(1)-(5-phospho-beta-D-ribosyl)glycinamide + L-glutamine + ATP + H2O = 2-formamido-N(1)-(5-O-phospho-beta-D-ribosyl)acetamidine + L-glutamate + ADP + phosphate + H(+). It carries out the reaction L-glutamine + H2O = L-glutamate + NH4(+). The protein operates within purine metabolism; IMP biosynthesis via de novo pathway; 5-amino-1-(5-phospho-D-ribosyl)imidazole from N(2)-formyl-N(1)-(5-phospho-D-ribosyl)glycinamide: step 1/2. In terms of biological role, part of the phosphoribosylformylglycinamidine synthase complex involved in the purines biosynthetic pathway. Catalyzes the ATP-dependent conversion of formylglycinamide ribonucleotide (FGAR) and glutamine to yield formylglycinamidine ribonucleotide (FGAM) and glutamate. The FGAM synthase complex is composed of three subunits. PurQ produces an ammonia molecule by converting glutamine to glutamate. PurL transfers the ammonia molecule to FGAR to form FGAM in an ATP-dependent manner. PurS interacts with PurQ and PurL and is thought to assist in the transfer of the ammonia molecule from PurQ to PurL. This Nocardia farcinica (strain IFM 10152) protein is Phosphoribosylformylglycinamidine synthase subunit PurQ.